Consider the following 464-residue polypeptide: MVQAAFSPVGPTLGDAIPGFGTDGIRGRVGSVVTPALCLQVGYWVGRVLAVEGPVLIGMDSRTSGSMVASALTAGLTAAGREVWNLGLCPTPAVPLLIRKFGAAGGLMVSASHNPPADNGIKVFGANGAKLAPERQARIEAGLRGEIDHSDHDHSLCAGLRQSSDLMADYRELLLSAVGSHRLDGVPIVLDLCWGSATACAADAFQALGADLTVLHGEPDGSRINVGCGSTALGPLQEAVKERGAVMGFAFDGDADRMLAVDGRGRIVDGDHVMFLWGSVLQEQQALPDQRLVATVMSNLGFQRAWEQRGGILERTPVGDQHVHAAMVASGAALGGEQSGHILAASHGLCGDGVLTALQLSTLCHAKGITLGDWLDRSFQPFPQKLVNVTVPSQARRKAWSSCEPLVAAIRSAEETMGSDGRVLVRASGTEPLVRVMVEAADASLVDHWADHLASVVDQSLNAA.

Serine 112 functions as the Phosphoserine intermediate in the catalytic mechanism. Mg(2+)-binding residues include serine 112, aspartate 252, aspartate 254, and aspartate 256. At serine 112 the chain carries Phosphoserine.

The protein belongs to the phosphohexose mutase family. Mg(2+) serves as cofactor. Activated by phosphorylation.

The catalysed reaction is alpha-D-glucosamine 1-phosphate = D-glucosamine 6-phosphate. Functionally, catalyzes the conversion of glucosamine-6-phosphate to glucosamine-1-phosphate. The polypeptide is Phosphoglucosamine mutase (Synechococcus sp. (strain CC9902)).